A 472-amino-acid polypeptide reads, in one-letter code: Probable serine/threonine-protein kinase At1g01540 (472 aa).

Residues 24 to 44 form a helical membrane-spanning segment; sequence LWVVIGILLGSLIVIALFLLS. A phosphothreonine mark is found at threonine 67 and threonine 143. The region spanning 154-431 is the Protein kinase domain; it reads LCEENVIGEG…IHMLEAEDLL (278 aa). ATP is bound by residues 160 to 168 and lysine 182; that span reads IGEGGYGIV. Tyrosine 227 is subject to Phosphotyrosine. Aspartate 280 acts as the Proton acceptor in catalysis. The residue at position 284 (serine 284) is a Phosphoserine. 2 positions are modified to phosphothreonine: threonine 314 and threonine 319. Residue tyrosine 327 is modified to Phosphotyrosine. The span at 437–449 shows a compositional bias: basic and acidic residues; that stretch reads RTTRDHGSRERQE. Residues 437–472 form a disordered region; the sequence is RTTRDHGSRERQETAVVAAGSESGESGSRHHQQKQR. Residues 451–462 show a composition bias toward low complexity; it reads AVVAAGSESGES.

Belongs to the protein kinase superfamily. Ser/Thr protein kinase family.

The protein localises to the membrane. It carries out the reaction L-seryl-[protein] + ATP = O-phospho-L-seryl-[protein] + ADP + H(+). It catalyses the reaction L-threonyl-[protein] + ATP = O-phospho-L-threonyl-[protein] + ADP + H(+). This chain is Probable serine/threonine-protein kinase At1g01540, found in Arabidopsis thaliana (Mouse-ear cress).